We begin with the raw amino-acid sequence, 261 residues long: Calbindin (261 aa).

Alanine 2 carries the post-translational modification N-acetylalanine. An interaction with RANBP9 region spans residues 2–7; sequence AESHLQ. EF-hand domains are found at residues 11–46, 53–88, 98–133, 142–177, and 186–221; these read ITASQFFEIWLHFDADGSGYLEGKELQNLIQELLQA, ELSPEMKTFVDQYGQRDDGKIGIVELAHVLPTEENF, KSCEEFMKTWRKYDTDHSGFIETEELKNFLKDLLEK, KLAEYTDLMLKLFDSNNDGKLELTEMARLLPVQENF, and MCGKEFNKAFELYDQDGNGYIDENELDALLKDLCEK. Ca(2+)-binding residues include aspartate 24, aspartate 26, serine 28, tyrosine 30, and glutamate 35. Aspartate 111, aspartate 113, serine 115, glutamate 122, aspartate 155, asparagine 157, aspartate 159, lysine 161, glutamate 166, aspartate 199, aspartate 201, asparagine 203, tyrosine 205, and glutamate 210 together coordinate Ca(2+).

Belongs to the calbindin family. In terms of assembly, interacts with RANBP9.

In terms of biological role, buffers cytosolic calcium. May stimulate a membrane Ca(2+)-ATPase and a 3',5'-cyclic nucleotide phosphodiesterase. This is Calbindin (Calb1) from Rattus norvegicus (Rat).